The following is a 1365-amino-acid chain: Serine-aspartate repeat-containing protein D (1365 aa).

The N-terminal stretch at 1–35 is a signal peptide; the sequence is MLNRENKTAITRKGMVSNRLNKFSIRKYTVGTASI. A YSIRK-G/S signaling motif motif is present at residues 23-34; sequence FSIRKYTVGTAS. A ligand binding A region region spans residues 36 to 568; it reads LVGTTLIFGL…NNQSGGAGQE (533 aa). The interval 54-185 is disordered; sequence ESTNKELNEA…NKKVDAKTES (132 aa). 2 stretches are compositionally biased toward polar residues: residues 62 to 71 and 94 to 109; these read EATTSASDNQ and EMVSSQGNETTSNGNK. A compositionally biased stretch (basic and acidic residues) spans 130-145; the sequence is KSDEQASPKSTNEDLN. 2 stretches are compositionally biased toward polar residues: residues 146–155 and 163–173; these read TKQTISNQEA and NKSVVNAQPTN. The segment covering 174-183 has biased composition (basic and acidic residues); that stretch reads EENKKVDAKT. 5 CNA-B domains span residues 569–680, 681–791, 792–901, 902–1012, and 1013–1123; these read VYKI…IYKP, KYNL…YKTP, KYNL…FYKP, TYNL…YKTP, and KYSL…EEDT. Disordered regions lie at residues 857 to 884, 972 to 991, and 1078 to 1341; these read ETPSGYTPTQVGSGTDEGIDSNGTSTTG, YTPTSVTSGNDTEKDSNGLT, and EKPA…SNNA. Composition is skewed to polar residues over residues 860 to 869 and 972 to 981; these read SGYTPTQVGS and YTPTSVTSGN. Acidic residues-rich tracts occupy residues 1091–1101 and 1118–1304; these read TEDDKDADGGE and YFEE…DSDS. The LPXTG sorting signal motif lies at 1328-1332; it reads LPETG. At T1331 the chain carries Pentaglycyl murein peptidoglycan amidated threonine. The propeptide at 1332 to 1365 is removed by sortase; sequence GNENSGSNNATLFGGLFAALGSLLLFGRRKKQNK.

Belongs to the serine-aspartate repeat-containing protein (SDr) family. Interacts with host DSG1; this interaction increases S.aureus adherence to keratinocytes.

The protein resides in the secreted. Its subcellular location is the cell wall. Functionally, cell surface-associated calcium-binding protein which plays an important role in adhesion and pathogenesis. Mediates interactions with components of the extracellular matrix such as host DSG1 to promote bacterial adhesion to host cells. Contributes to the resistance to killing by innate immune components such as neutrophils present in blood and thus attenuates bacterial clearance. The protein is Serine-aspartate repeat-containing protein D (sdrD) of Staphylococcus aureus (strain MSSA476).